A 260-amino-acid chain; its full sequence is Acetylglutamate kinase (260 aa).

Substrate-binding positions include 41 to 42 (GG), Arg63, and Asn156.

It belongs to the acetylglutamate kinase family. ArgB subfamily.

The protein resides in the cytoplasm. The enzyme catalyses N-acetyl-L-glutamate + ATP = N-acetyl-L-glutamyl 5-phosphate + ADP. The protein operates within amino-acid biosynthesis; L-arginine biosynthesis; N(2)-acetyl-L-ornithine from L-glutamate: step 2/4. Functionally, catalyzes the ATP-dependent phosphorylation of N-acetyl-L-glutamate. This chain is Acetylglutamate kinase, found in Halalkalibacterium halodurans (strain ATCC BAA-125 / DSM 18197 / FERM 7344 / JCM 9153 / C-125) (Bacillus halodurans).